We begin with the raw amino-acid sequence, 228 residues long: Ribulose-phosphate 3-epimerase (228 aa).

A substrate-binding site is contributed by S9. A divalent metal cation-binding residues include H34, D36, H68, and D177. Catalysis depends on D36, which acts as the Proton acceptor. Residues H68, 177-179 (DGG), and 199-200 (GS) contribute to the substrate site. D177 functions as the Proton donor in the catalytic mechanism.

The protein belongs to the ribulose-phosphate 3-epimerase family. Requires a divalent metal cation as cofactor.

The enzyme catalyses D-ribulose 5-phosphate = D-xylulose 5-phosphate. Its pathway is carbohydrate degradation. Catalyzes the reversible epimerization of D-ribulose 5-phosphate to D-xylulose 5-phosphate. The sequence is that of Ribulose-phosphate 3-epimerase from Buchnera aphidicola subsp. Acyrthosiphon pisum (strain APS) (Acyrthosiphon pisum symbiotic bacterium).